The chain runs to 772 residues: Transducin-like enhancer protein 4 (772 aa).

Disordered stretches follow at residues 1-24 and 183-359; these read MIRDLSKMYPQTRHPAPPHQPAQP and LPIK…LTGL. The interval 1-137 is q domain; that stretch reads MIRDLSKMYP…AIIGQQLQAQ (137 aa). The interval 138 to 205 is GP domain; it reads HLSHAHGLPV…HQRDRDSIKS (68 aa). The span at 184-203 shows a compositional bias: basic and acidic residues; the sequence is PIKDEKKHHDSDHQRDRDSI. Residues 204 to 213 are compositionally biased toward low complexity; that stretch reads KSSSVSPSAS. Residues 206-275 form a ccN domain region; that stretch reads SSVSPSASFR…SPRGSPAHSP (70 aa). Basic and acidic residues-rich tracts occupy residues 216 to 253 and 274 to 290; these read AAEKHRNSTDYSSESKKQKTEEKDIAARYDSDGEKSDD and SPRENGLDKPRLLKKDA. The SP domain stretch occupies residues 276–452; the sequence is RENGLDKPRL…GGKPAYSFHV (177 aa). Low complexity predominate over residues 291–306; sequence PISPASIASSSSTPSS. A compositionally biased stretch (basic and acidic residues) spans 307-316; that stretch reads KSKEHSHNEK. Residues 318–329 show a composition bias toward polar residues; that stretch reads TTPVSKSNTPTP. WD repeat units follow at residues 484-522, 530-569, 574-613, 616-655, 657-696, 698-737, and 739-772; these read NHGEVVCAVTISNPTRHVYTGGKGCVKVWDISHPGNKSP, NRDNYIRSCRLLPDGRTLIVGGEASTLSIWDLAAPTPRIK, SSAPACYALAISPDSKVCFSCCSDGNIAVWDLHNQTLVRQ, GHTDGASCIDISNDGTKLWTGGLDNTVRSWDLREGRQLQQ, DFTSQIFSLGYCPTGEWLAVGMENSNVEVLHVTKPDKYQL, LHESCVLSLKFAHCGKWFVSTGKDNLLNAWRTPYGASIFQ, and KESSSVLSCDISVDDKYIVTGSGDKKATVYEVIY.

Belongs to the WD repeat Groucho/TLE family. As to quaternary structure, interacts with tcf7, tcf7l1, ripply2.2/bowline, dscr6/ripply3 and foxd3. Associates with tbx6 in the presence of ripply2.2/bowline. Interacts with EFNB1 through the SP domain. Ubiquitinated by XIAP/BIRC4. In terms of tissue distribution, expressed at high levels in the spleen and ovary.

It localises to the nucleus. Its function is as follows. Transcriptional corepressor. Functions with ripply2.2/bowline to down regulate transcription of tbx6-dependent gene expression. Represses transcription of siamois and nodal3. The protein is Transducin-like enhancer protein 4 (tle4) of Xenopus laevis (African clawed frog).